The sequence spans 216 residues: Ribonuclease HII (216 aa).

Positions 33–216 constitute an RNase H type-2 domain; it reads WPVAGADEAG…RMSFRPFRQL (184 aa). Residues aspartate 39, glutamate 40, and aspartate 130 each contribute to the a divalent metal cation site.

The protein belongs to the RNase HII family. The cofactor is Mn(2+). Requires Mg(2+) as cofactor.

Its subcellular location is the cytoplasm. It catalyses the reaction Endonucleolytic cleavage to 5'-phosphomonoester.. In terms of biological role, endonuclease that specifically degrades the RNA of RNA-DNA hybrids. The sequence is that of Ribonuclease HII from Sinorhizobium medicae (strain WSM419) (Ensifer medicae).